A 679-amino-acid polypeptide reads, in one-letter code: Methionine--tRNA ligase (679 aa).

The short motif at 14 to 24 (PYANGSIHLGH) is the 'HIGH' region element. Zn(2+) is bound by residues C145, C148, C158, and C161. The 'KMSKS' region motif lies at 331 to 335 (KMSKS). Residue K334 participates in ATP binding. One can recognise a tRNA-binding domain in the interval 577 to 679 (TFAAVDLRIA…NGAKPGQRVM (103 aa)).

It belongs to the class-I aminoacyl-tRNA synthetase family. MetG type 1 subfamily. In terms of assembly, homodimer. It depends on Zn(2+) as a cofactor.

The protein resides in the cytoplasm. It carries out the reaction tRNA(Met) + L-methionine + ATP = L-methionyl-tRNA(Met) + AMP + diphosphate. Its function is as follows. Is required not only for elongation of protein synthesis but also for the initiation of all mRNA translation through initiator tRNA(fMet) aminoacylation. In Stutzerimonas stutzeri (strain A1501) (Pseudomonas stutzeri), this protein is Methionine--tRNA ligase.